A 274-amino-acid chain; its full sequence is Imidazole glycerol phosphate synthase subunit HisF (274 aa).

Catalysis depends on residues aspartate 11 and aspartate 134.

This sequence belongs to the HisA/HisF family. As to quaternary structure, heterodimer of HisH and HisF.

The protein resides in the cytoplasm. The enzyme catalyses 5-[(5-phospho-1-deoxy-D-ribulos-1-ylimino)methylamino]-1-(5-phospho-beta-D-ribosyl)imidazole-4-carboxamide + L-glutamine = D-erythro-1-(imidazol-4-yl)glycerol 3-phosphate + 5-amino-1-(5-phospho-beta-D-ribosyl)imidazole-4-carboxamide + L-glutamate + H(+). Its pathway is amino-acid biosynthesis; L-histidine biosynthesis; L-histidine from 5-phospho-alpha-D-ribose 1-diphosphate: step 5/9. Functionally, IGPS catalyzes the conversion of PRFAR and glutamine to IGP, AICAR and glutamate. The HisF subunit catalyzes the cyclization activity that produces IGP and AICAR from PRFAR using the ammonia provided by the HisH subunit. The polypeptide is Imidazole glycerol phosphate synthase subunit HisF (Methanosphaera stadtmanae (strain ATCC 43021 / DSM 3091 / JCM 11832 / MCB-3)).